Here is a 539-residue protein sequence, read N- to C-terminus: Chaperonin GroEL (539 aa).

ATP contacts are provided by residues 29-32, 86-90, G413, 476-478, and D492; these read TIGP, DGTTT, and NAA.

It belongs to the chaperonin (HSP60) family. As to quaternary structure, forms a cylinder of 14 subunits composed of two heptameric rings stacked back-to-back. Interacts with the co-chaperonin GroES.

The protein localises to the cytoplasm. It carries out the reaction ATP + H2O + a folded polypeptide = ADP + phosphate + an unfolded polypeptide.. In terms of biological role, together with its co-chaperonin GroES, plays an essential role in assisting protein folding. The GroEL-GroES system forms a nano-cage that allows encapsulation of the non-native substrate proteins and provides a physical environment optimized to promote and accelerate protein folding. The sequence is that of Chaperonin GroEL from Staphylococcus epidermidis.